Reading from the N-terminus, the 193-residue chain is UPF0301 protein Fphi_1754 (193 aa).

It belongs to the UPF0301 (AlgH) family.

This is UPF0301 protein Fphi_1754 from Francisella philomiragia subsp. philomiragia (strain ATCC 25017 / CCUG 19701 / FSC 153 / O#319-036).